Reading from the N-terminus, the 1347-residue chain is MSQEYTEDKEVTLTKLSSGRRLLEALLILIVLFAVWLMAALLSFNPSDPSWSQTAWHEPIHNLGGMPGAWLADTLFFIFGVMAYTIPVIIVGGCWFAWRHQSSDEYIDYFAVSLRIIGVLALILTSCGLAAINADDIWYFASGGVIGSLLSTTLQPLLHSSGGTIALLCVWAAGLTLFTGWSWVTIAEKLGGWILNILTFASNRTRRDDTWVDEDEYEDDEEYEDENHGKQHESRRARILRGALARRKRLAEKFINPMGRQTDAALFSGKRMDDEEEITYTARGVAADPDDVLFSGNRATQPEYDEYDPLLNGAPITEPVAVAAAATTATQSWAAPVEPVTQTPPVASVDVPPTQPTVAWQPVPGPQTGEPVIAPAPEGYPHQSQYAQPAVQYNEPLQQPVQPQQPYYAPAAEQPVQQPYYAPAAEQPVQQPYYAPAPEQPVAGNAWQAEEQQSTFAPQSTYQTEQTYQQPAAQEPLYQQPQPVEQQPVVEPEPVVEETKPTRPPLYYFEEVEEKRAREREQLAAWYQPIPEPVKEPEPIKSSLKAPSVAAVPPVEAAAAVSPLASGVKKATLATGAAATVAAPVFSLANSGGPRPQVKEGIGPQLPRPKRIRVPTRRELASYGIKLPSQRAAEEKAREAQRNQYDSGDQYNDDEIDAMQQDELARQFAQTQQQRYGEQYQHDVPVNTEDADAAAEAELARQFAQTQQQRYSGEQPAGANPFSLDDFEFSPMKALLDDGPHEPLFTPIVEPVQQPQQPVAPQQQYQQPQQPVAPQPQYQQPQQPVAPQPQYQQPQYQQPQQPVAPQQQYQQPQQPVTQQPQYQQPQQPVVPQPQDTLLHPLLMRNGDSRPLHKPTTPLPSLDLLTPPPSEVEPVDTFALEQMARLVEARLADFRIKADVVNYSPGPVITRFELNLAPGVKAARISNLSRDLARSLSTVAVRVVEVIPGKPYVGLELPNKKRQTVYLREVLDNAKFRDNPSPLTVVLGKDIAGEPVVADLAKMPHLLVAGTTGSGKSVGVNAMILSMLYKAQPEDVRFIMIDPKMLELSVYEGIPHLLTEVVTDMKDAANALRWCVNEMERRYKLMSALGVRNLAGYNEKIAEADRMMRPIPDPYWKPGDSMDAQHPVLKKEPYIVVLVDEFADLMMTVGKKVEELIARLAQKARAAGIHLVLATQRPSVDVITGLIKANIPTRIAFTVSSKIDSRTILDQAGAESLLGMGDMLYSGPNSTLPVRVHGAFVRDQEVHAVVQDWKARGRPQYVDGITSDSESEGGVGGFDGAEELDPLFDQAVQFVTEKRKASISGVQRQFRIGYNRAARIIEQMEAQGIVSEQGHNGNREVLAPPPFD.

Topologically, residues 1 to 24 (MSQEYTEDKEVTLTKLSSGRRLLE) are cytoplasmic. A helical membrane pass occupies residues 25-44 (ALLILIVLFAVWLMAALLSF). Over 45–74 (NPSDPSWSQTAWHEPIHNLGGMPGAWLADT) the chain is Periplasmic. The helical transmembrane segment at 75–98 (LFFIFGVMAYTIPVIIVGGCWFAW) threads the bilayer. Topologically, residues 99 to 115 (RHQSSDEYIDYFAVSLR) are cytoplasmic. The helical transmembrane segment at 116 to 132 (IIGVLALILTSCGLAAI) threads the bilayer. Residues 133–162 (NADDIWYFASGGVIGSLLSTTLQPLLHSSG) are Periplasmic-facing. A helical membrane pass occupies residues 163–179 (GTIALLCVWAAGLTLFT). The Cytoplasmic segment spans residues 180-1347 (GWSWVTIAEK…REVLAPPPFD (1168 aa)). Disordered regions lie at residues 354 to 384 (TQPT…PHQS), 434 to 502 (YAPA…TKPT), 589 to 725 (ANSG…FSLD), and 754 to 867 (QPQQ…LTPP). Low complexity predominate over residues 434–443 (YAPAPEQPVA). A compositionally biased stretch (polar residues) spans 450–461 (EEQQSTFAPQST). Over residues 462–493 (YQTEQTYQQPAAQEPLYQQPQPVEQQPVVEPE) the composition is skewed to low complexity. The segment covering 632 to 641 (AAEEKAREAQ) has biased composition (basic and acidic residues). Over residues 670–679 (QTQQQRYGEQ) the composition is skewed to low complexity. Residues 703 to 712 (FAQTQQQRYS) are compositionally biased toward polar residues. Low complexity-rich tracts occupy residues 754-834 (QPQQ…PQPQ) and 854-864 (PTTPLPSLDLL). Residues 992-1205 (GEPVVADLAK…FTVSSKIDSR (214 aa)) enclose the FtsK domain. 1012–1017 (GSGKSV) contributes to the ATP binding site.

The protein belongs to the FtsK/SpoIIIE/SftA family. Homohexamer. Forms a ring that surrounds DNA.

It localises to the cell inner membrane. In terms of biological role, essential cell division protein that coordinates cell division and chromosome segregation. The N-terminus is involved in assembly of the cell-division machinery. The C-terminus functions as a DNA motor that moves dsDNA in an ATP-dependent manner towards the dif recombination site, which is located within the replication terminus region. Translocation stops specifically at Xer-dif sites, where FtsK interacts with the Xer recombinase, allowing activation of chromosome unlinking by recombination. FtsK orienting polar sequences (KOPS) guide the direction of DNA translocation. FtsK can remove proteins from DNA as it translocates, but translocation stops specifically at XerCD-dif site, thereby preventing removal of XerC and XerD from dif. This is DNA translocase FtsK (ftsK) from Escherichia coli O6:H1 (strain CFT073 / ATCC 700928 / UPEC).